The sequence spans 860 residues: Spindle and centriole-associated protein 1 (860 aa).

Disordered stretches follow at residues 160-200, 232-254, and 293-330; these read ESVI…SQSN, QSQM…QKAA, and KQLL…SSSN. Thr-236 is modified (phosphothreonine). Residues 236 to 249 are compositionally biased toward low complexity; that stretch reads TASSGTPSSASPSG. Positions 308–330 are enriched in polar residues; it reads PSKQKSSMLSASTASTDLPSSSN. The stretch at 383–437 forms a coiled coil; the sequence is RYLKESELQLRKEVETRQRLEEALGDHRELIDALTAEVLFLREENTATQARLQQY. Ser-646 bears the Phosphoserine mark. A coiled-coil region spans residues 729-755; that stretch reads SSMEERIAELNRQSMEARGKLLQLIEQ. Phosphoserine is present on residues Ser-765, Ser-769, and Ser-824. Positions 790–860 are disordered; that stretch reads IPGAEAPESS…GWFALSTHVS (71 aa). Over residues 808-824 the composition is skewed to low complexity; sequence SGLNSRRSSGAASNSCS.

In terms of assembly, interacts with CEP120.

It localises to the cytoplasm. The protein resides in the cytoskeleton. The protein localises to the microtubule organizing center. It is found in the centrosome. Its subcellular location is the centriole. It localises to the spindle. Functionally, regulator required for centriole duplication. for proper bipolar spindle formation and chromosome congression in mitosis. In Bos taurus (Bovine), this protein is Spindle and centriole-associated protein 1 (SPICE1).